The primary structure comprises 883 residues: Protein P (883 aa).

The interval 1 to 183 (MHPFSRLFRN…GKPYSWEHRQ (183 aa)) is terminal protein domain (TP). Residues 184-386 (LVQHNGQQHK…YCIHHIVSSL (203 aa)) form a spacer region. Residues 298 to 344 (RNSGHTTWFSSASNSNKSRSREKAYSSNSTSKRYSPPLNYEKSDFSS) form a disordered region. Residues 387–728 (DDWGPCTVTG…YEELWPVVRQ (342 aa)) form a polymerase/reverse transcriptase domain (RT) region. The 242-residue stretch at 397–638 (DVTIKSPRTP…NHLHFMGYVI (242 aa)) folds into the Reverse transcriptase domain. Positions 469, 589, and 590 each coordinate Mg(2+).

This sequence belongs to the hepadnaviridae P protein family.

It catalyses the reaction DNA(n) + a 2'-deoxyribonucleoside 5'-triphosphate = DNA(n+1) + diphosphate. It carries out the reaction Endonucleolytic cleavage to 5'-phosphomonoester.. Activated by host HSP70 and HSP40 in vitro to be able to bind the epsilon loop of the pgRNA. Because deletion of the RNase H region renders the protein partly chaperone-independent, the chaperones may be needed indirectly to relieve occlusion of the RNA-binding site by this domain. Inhibited by several reverse-transcriptase inhibitors: Lamivudine, Adefovir and Entecavir. Multifunctional enzyme that converts the viral RNA genome into dsDNA in viral cytoplasmic capsids. This enzyme displays a DNA polymerase activity that can copy either DNA or RNA templates, and a ribonuclease H (RNase H) activity that cleaves the RNA strand of RNA-DNA heteroduplexes in a partially processive 3'- to 5'-endonucleasic mode. Neo-synthesized pregenomic RNA (pgRNA) are encapsidated together with the P protein, and reverse-transcribed inside the nucleocapsid. Initiation of reverse-transcription occurs first by binding the epsilon loop on the pgRNA genome, and is initiated by protein priming, thereby the 5'-end of (-)DNA is covalently linked to P protein. Partial (+)DNA is synthesized from the (-)DNA template and generates the relaxed circular DNA (RC-DNA) genome. After budding and infection, the RC-DNA migrates in the nucleus, and is converted into a plasmid-like covalently closed circular DNA (cccDNA). The activity of P protein does not seem to be necessary for cccDNA generation, and is presumably released from (+)DNA by host nuclear DNA repair machinery. This chain is Protein P, found in Woodchuck hepatitis B virus (isolate 2) (WHV).